The following is a 391-amino-acid chain: DNA primase small subunit PriS (391 aa).

Catalysis depends on residues Asp-98, Asp-100, and Asp-294.

It belongs to the eukaryotic-type primase small subunit family. As to quaternary structure, heterodimer of a small subunit (PriS) and a large subunit (PriL). The cofactor is Mg(2+). Mn(2+) is required as a cofactor.

Catalytic subunit of DNA primase, an RNA polymerase that catalyzes the synthesis of short RNA molecules used as primers for DNA polymerase during DNA replication. The small subunit contains the primase catalytic core and has DNA synthesis activity on its own. Binding to the large subunit stabilizes and modulates the activity, increasing the rate of DNA synthesis while decreasing the length of the DNA fragments, and conferring RNA synthesis capability. The DNA polymerase activity may enable DNA primase to also catalyze primer extension after primer synthesis. May also play a role in DNA repair. The sequence is that of DNA primase small subunit PriS from Halobacterium salinarum (strain ATCC 29341 / DSM 671 / R1).